Here is a 105-residue protein sequence, read N- to C-terminus: Small ribosomal subunit protein uS10 (105 aa).

The protein belongs to the universal ribosomal protein uS10 family. In terms of assembly, part of the 30S ribosomal subunit.

In terms of biological role, involved in the binding of tRNA to the ribosomes. This chain is Small ribosomal subunit protein uS10, found in Bdellovibrio bacteriovorus (strain ATCC 15356 / DSM 50701 / NCIMB 9529 / HD100).